Consider the following 237-residue polypeptide: Phosphoribosylaminoimidazole-succinocarboxamide synthase (237 aa).

This sequence belongs to the SAICAR synthetase family.

It catalyses the reaction 5-amino-1-(5-phospho-D-ribosyl)imidazole-4-carboxylate + L-aspartate + ATP = (2S)-2-[5-amino-1-(5-phospho-beta-D-ribosyl)imidazole-4-carboxamido]succinate + ADP + phosphate + 2 H(+). The protein operates within purine metabolism; IMP biosynthesis via de novo pathway; 5-amino-1-(5-phospho-D-ribosyl)imidazole-4-carboxamide from 5-amino-1-(5-phospho-D-ribosyl)imidazole-4-carboxylate: step 1/2. The polypeptide is Phosphoribosylaminoimidazole-succinocarboxamide synthase (Baumannia cicadellinicola subsp. Homalodisca coagulata).